Here is a 236-residue protein sequence, read N- to C-terminus: Putative (5-formylfuran-3-yl)methyl phosphate synthase (236 aa).

The active-site Schiff-base intermediate with substrate is K38. The Proton acceptor role is filled by K94.

The protein belongs to the MfnB family.

It carries out the reaction 2 D-glyceraldehyde 3-phosphate = 4-(hydroxymethyl)-2-furancarboxaldehyde phosphate + phosphate + 2 H2O. In terms of biological role, catalyzes the formation of 4-(hydroxymethyl)-2-furancarboxaldehyde phosphate (4-HFC-P) from two molecules of glyceraldehyde-3-P (GA-3-P). This chain is Putative (5-formylfuran-3-yl)methyl phosphate synthase, found in Methylorubrum extorquens (Methylobacterium dichloromethanicum).